Reading from the N-terminus, the 71-residue chain is Biotinylated protein TB7.3 homolog (71 aa).

In terms of domain architecture, Biotinyl-binding spans 2–71; sequence AEDVRAEIVA…QAGDLIAVIS (70 aa). Lys-37 is subject to N6-biotinyllysine.

This Mycobacterium leprae (strain TN) protein is Biotinylated protein TB7.3 homolog.